The chain runs to 138 residues: Superoxide dismutase [Mn] (138 aa).

Residues Ser1, His49, Asp133, and His137 each coordinate Mn(2+).

The protein belongs to the iron/manganese superoxide dismutase family. Mn(2+) serves as cofactor.

The catalysed reaction is 2 superoxide + 2 H(+) = H2O2 + O2. Its function is as follows. Destroys superoxide anion radicals which are normally produced within the cells and which are toxic to biological systems. The polypeptide is Superoxide dismutase [Mn] (sodA) (Mycobacterium marinum).